A 582-amino-acid chain; its full sequence is Multicopper oxidase LPR1 homolog 1 (582 aa).

The first 20 residues, 1 to 20, serve as a signal peptide directing secretion; sequence MRAKVELAVLLLVLVGVAAG. 4 residues coordinate Cu cation: His150, His152, His198, and His200. Asn256, Asn300, and Asn308 each carry an N-linked (GlcNAc...) asparagine glycan. In terms of domain architecture, Plastocyanin-like spans 285–354; it reads PFLAVARRRY…DVVVDFSQST (70 aa). Residues His467, His470, and His472 each contribute to the Cu cation site. Asn504 is a glycosylation site (N-linked (GlcNAc...) asparagine). Cu cation is bound by residues His563, Cys564, His565, His569, and Met574.

The protein belongs to the multicopper oxidase family. The cofactor is Cu cation. Highly expressed in roots, and at lower levels in basal stems and leaf blades.

It localises to the endoplasmic reticulum membrane. Its function is as follows. Multicopper oxidase that may play a role in the maintenance of inorganic phosphate homeostasis. This is Multicopper oxidase LPR1 homolog 1 from Oryza sativa subsp. japonica (Rice).